A 1323-amino-acid polypeptide reads, in one-letter code: Clustered mitochondria protein homolog (1323 aa).

A TPR 1 repeat occupies 103–141 (KEKPYNLAAIYDHLNKFREVIGLHFLDKYSSEVGVLSGV). The segment at 149 to 186 (LQDVKETEPETQDDKDKETDETKSTKEDSNQTEEKKSE) is disordered. Residues 150 to 186 (QDVKETEPETQDDKDKETDETKSTKEDSNQTEEKKSE) are compositionally biased toward basic and acidic residues. The region spanning 351-608 (FANQPDASRS…RATPLDIEFI (258 aa)) is the Clu domain. One copy of the TPR 2 repeat lies at 530 to 563 (CYGLSTDGSKIFSDSSFENVLKPIAEAFHLKPHP). Positions 764-801 (NEEEISKRKEESEKKATEGKDQDKEEEKANDNEKNKED) are enriched in basic and acidic residues. A disordered region spans residues 764–808 (NEEEISKRKEESEKKATEGKDQDKEEEKANDNEKNKEDDKEEVSN). 4 TPR repeats span residues 1042 to 1076 (LSVY…KSEA), 1099 to 1132 (ITAY…WTLV), 1141 to 1174 (VNTY…STKL), and 1183 to 1216 (GMLR…FTKF). The tract at residues 1250-1323 (KALAQQASAS…KKSNNKKSKK (74 aa)) is disordered. Basic residues predominate over residues 1308 to 1323 (PKKQLKKKSNNKKSKK).

It belongs to the CLU family. In terms of assembly, may associate with the eukaryotic translation initiation factor 3 (eIF-3) complex.

The protein localises to the cytoplasm. In terms of biological role, mRNA-binding protein involved in proper cytoplasmic distribution of mitochondria. The protein is Clustered mitochondria protein homolog of Debaryomyces hansenii (strain ATCC 36239 / CBS 767 / BCRC 21394 / JCM 1990 / NBRC 0083 / IGC 2968) (Yeast).